Reading from the N-terminus, the 1621-residue chain is MSSIPTPPDANGNPLIALAVAVIYAILYVLQGVKYGVSLLTIGIPSCIVRMLQYSLTISLGFPHLLALFAGALLALFFLIRYRYLTRYAQLKESALPPPSPPALASRLLPLDGDGLGLPDSRSQTSSFHNYLDDFLSAIRIFGYLEKPVFHELSRHLQTRRLAAGDTLEIGGGEFWCVVEGKVQVFAPDASSQGTPTPSSDTNSPTRPSFNGYHLLNEVSTGGTLSSLFSILSLFTEDIKLSWKSSADDEGEEEQIFEGAPEQSSAKLRVRRANSDVSQLGPDSIGVRAMDPTPLPESIDSHGDSSVPQRRRERSSSIDAAGETVREREGIFASASLPISSTEPPSPRRSQSLRSSPRLNSATNLLSSQSEHLRSSVPRKAGIEIGSKALKGTIARATEDTTLAVIPAAAFRKLTRKFPKASGTIVQVVLERFSRVTFMTAHKYLGLTREILQTESSLNLLVTHPLPRSFYTGGGMQALRARFQPEALAKESVHYDSLKSSPNARVSSKDYFNYVPASPTVKAPSLPAMTPKPLSPIIHKSSLGQTATTTVKNEPLNGGSSPLDETRDKVPSFGLSTAAATNPDASFRHASPFIRRTSAMRQQVAAGDLAMSVHNLPDESGQAYYRPTAITPGLSKMDTWQRRYSSSWNLNDSPHTDGQPVDPQRDDESLLNESFDLKEAVLNSIAKSIGLYQEAESNSDMIARSSMAPSVSALSTPNSPMFPPNAGTPLQGSTRSRPPHFGNVLDLINASSQNEGVIGGMLREAAFNSRPDDEASSISMSLHDSQGGASGVDRKIMKDLERHVEILFFKKGSVLVKEGERSPGMYYVIDGFLETSLPFRSTSSNQENPNSTPGSKHRQSSFGSSNERPFKTALGLDTSKGKELDDGSKKDEALFTVKPGGIAGYLSSLCCTDSYVDITAKTDCFVGFLPHHTLERIIERRPIVLLTLAKRLLSLLSPLVLHIDAALDWQQLNAGQVLYEKGDKSTDFYIVINGRLRAFTEKNDNMHVLREYGQNDSIGELDVITAVDRSETVHAIRDSELVRIPAALFDAISIKHPETTVQFMRLIAGRVRRALGDEMNGRVPGLPTTDMNLKTVCVLGSTRNVPVTQFAGKLKNALEEIGASTSYLDQGIVMRHLGRHAFARIGKLKVAGWLADQEQHYRTVLYVADSPPASQWTLTCIRQADLVLVVSMGDDPSLGEYEKLLLATKTTARKELILLHDERTVAPGSTRQWLSNRPWIQTHYHVELPGVVTPARPIPPVHDAAAIAAFKHLREQVETRIKKYRGLRPFTRPRRPPHMNDFARIARRLCGQQIGLVLGGGGARGISHIGMLQALEEFGIPIDAIGGCSIGSFVGGLYARETDLLETAGRTKQFSGRMGSMWRILSDVTYPFVSYTTGHEFNRGIYKAFYNTHIEDFWIPFFANSTNITHSRMEVHRTGYAWRYVRASMTLAGLLPPLSDNGNLLVDGGYMDNTPIQPLRENGIRDIIVVDVGSVDDTSPRDYGDSVSGWWIFFNRFNPFYERRVLSMTEISSRLTYVSSVKTLEGVKATPGCHYIAMPVQQFDTLGGFKRFSEVMEIGLKAGRETLKKWKEEGKLPTGLVDEAKGSKAVQRGNRLRRMSI.

Residues 1-12 (MSSIPTPPDANG) are Cytoplasmic-facing. A helical transmembrane segment spans residues 13–33 (NPLIALAVAVIYAILYVLQGV). The Lumenal segment spans residues 34 to 59 (KYGVSLLTIGIPSCIVRMLQYSLTIS). The helical transmembrane segment at 60–80 (LGFPHLLALFAGALLALFFLI) threads the bilayer. Over 81-1621 (RYRYLTRYAQ…RGNRLRRMSI (1541 aa)) the chain is Cytoplasmic. Disordered stretches follow at residues 188–209 (PDAS…TRPS), 250–379 (EGEE…SVPR), 545–566 (QTAT…LDET), 648–667 (WNLN…QRDD), 711–735 (VSAL…GSTR), 772–791 (DDEA…GASG), and 839–870 (FRST…ERPF). Composition is skewed to low complexity over residues 195-209 (TPTP…TRPS) and 348-361 (RRSQ…RLNS). A nucleoside 3',5'-cyclic phosphate contacts are provided by residues 788 to 907 (GASG…GYLS) and 951 to 1070 (RLLS…IAGR). Over residues 839 to 867 (FRSTSSNQENPNSTPGSKHRQSSFGSSNE) the composition is skewed to polar residues. The PNPLA domain occupies 1316-1480 (LVLGGGGARG…MDNTPIQPLR (165 aa)). Positions 1320–1325 (GGGARG) match the GXGXXG motif. Residues 1347-1351 (GCSIG) carry the GXSXG motif. Ser1349 serves as the catalytic Nucleophile. Asp1467 functions as the Proton acceptor in the catalytic mechanism. The short motif at 1467-1469 (DGG) is the DGA/G element.

The protein belongs to the NTE family.

The protein localises to the endoplasmic reticulum membrane. The catalysed reaction is a 1-acyl-sn-glycero-3-phosphocholine + H2O = sn-glycerol 3-phosphocholine + a fatty acid + H(+). Its activity is regulated as follows. Inhibited by organophosphorus esters. Intracellular phospholipase B that catalyzes the double deacylation of phosphatidylcholine (PC) to glycerophosphocholine (GroPCho). Plays an important role in membrane lipid homeostasis. Responsible for the rapid PC turnover in response to inositol, elevated temperatures, or when choline is present in the growth medium. The chain is Lysophospholipase NTE1 (NTE1) from Cryptococcus neoformans var. neoformans serotype D (strain B-3501A) (Filobasidiella neoformans).